Consider the following 345-residue polypeptide: Molybdopterin synthase catalytic subunit (345 aa).

Residues 101–102 (HR), lysine 117, and 124–126 (KKE) contribute to the substrate site.

This sequence belongs to the MoaE family. MOCS2B subfamily. Heterotetramer; composed of 2 small (Mocs2A) and 2 large (Mocs2B) subunits.

The protein resides in the cytoplasm. The catalysed reaction is 2 [molybdopterin-synthase sulfur-carrier protein]-C-terminal-Gly-aminoethanethioate + cyclic pyranopterin phosphate + H2O = molybdopterin + 2 [molybdopterin-synthase sulfur-carrier protein]-C-terminal Gly-Gly + 2 H(+). Its pathway is cofactor biosynthesis; molybdopterin biosynthesis. Catalytic subunit of the molybdopterin synthase complex, a complex that catalyzes the conversion of precursor Z into molybdopterin. Acts by mediating the incorporation of 2 sulfur atoms from thiocarboxylated Mocs2A into precursor Z to generate a dithiolene group. This is Molybdopterin synthase catalytic subunit from Drosophila virilis (Fruit fly).